The sequence spans 694 residues: Elongation factor G (694 aa).

A tr-type G domain is found at 6 to 288; sequence KLYRNIGIAA…GVIEYLPSPT (283 aa). GTP contacts are provided by residues 15–22, 86–90, and 140–143; these read AHVDAGKT, DTPGH, and NKMD.

The protein belongs to the TRAFAC class translation factor GTPase superfamily. Classic translation factor GTPase family. EF-G/EF-2 subfamily.

The protein localises to the cytoplasm. Catalyzes the GTP-dependent ribosomal translocation step during translation elongation. During this step, the ribosome changes from the pre-translocational (PRE) to the post-translocational (POST) state as the newly formed A-site-bound peptidyl-tRNA and P-site-bound deacylated tRNA move to the P and E sites, respectively. Catalyzes the coordinated movement of the two tRNA molecules, the mRNA and conformational changes in the ribosome. The protein is Elongation factor G of Legionella pneumophila (strain Paris).